Here is a 206-residue protein sequence, read N- to C-terminus: Transcriptional regulator GfcR (206 aa).

The protein belongs to the purine/pyrimidine phosphoribosyltransferase family. GfcR subfamily.

The protein is Transcriptional regulator GfcR of Methanosphaerula palustris (strain ATCC BAA-1556 / DSM 19958 / E1-9c).